We begin with the raw amino-acid sequence, 158 residues long: SsrA-binding protein (158 aa).

A compositionally biased stretch (basic and acidic residues) spans 133 to 148 (KAQDKRETSAKRDWNR). The tract at residues 133-158 (KAQDKRETSAKRDWNRQKARLLKQNG) is disordered. Over residues 149–158 (QKARLLKQNG) the composition is skewed to basic residues.

This sequence belongs to the SmpB family.

The protein resides in the cytoplasm. Required for rescue of stalled ribosomes mediated by trans-translation. Binds to transfer-messenger RNA (tmRNA), required for stable association of tmRNA with ribosomes. tmRNA and SmpB together mimic tRNA shape, replacing the anticodon stem-loop with SmpB. tmRNA is encoded by the ssrA gene; the 2 termini fold to resemble tRNA(Ala) and it encodes a 'tag peptide', a short internal open reading frame. During trans-translation Ala-aminoacylated tmRNA acts like a tRNA, entering the A-site of stalled ribosomes, displacing the stalled mRNA. The ribosome then switches to translate the ORF on the tmRNA; the nascent peptide is terminated with the 'tag peptide' encoded by the tmRNA and targeted for degradation. The ribosome is freed to recommence translation, which seems to be the essential function of trans-translation. This Jannaschia sp. (strain CCS1) protein is SsrA-binding protein.